Consider the following 100-residue polypeptide: Urease subunit gamma (100 aa).

The protein belongs to the urease gamma subunit family. As to quaternary structure, heterotrimer of UreA (gamma), UreB (beta) and UreC (alpha) subunits. Three heterotrimers associate to form the active enzyme.

The protein resides in the cytoplasm. The catalysed reaction is urea + 2 H2O + H(+) = hydrogencarbonate + 2 NH4(+). It participates in nitrogen metabolism; urea degradation; CO(2) and NH(3) from urea (urease route): step 1/1. This is Urease subunit gamma from Pseudomonas fluorescens (strain ATCC BAA-477 / NRRL B-23932 / Pf-5).